The following is a 175-amino-acid chain: MSEQKQEIENENAQNSENLQDDLQDNEKNETNELQKELEELKDKYMRANAEFENIKKRMEKEKLSAMAYANESFAKDLLDVLDALEAAVNVECQDEISLKIKEGVQNTLDLFLKKLEKHGVALIKDEKEFDPNLHEAMFHVDSENHQSGEVVQVLQKGYKIADRVIRPTKVSVAK.

The disordered stretch occupies residues 1-35 (MSEQKQEIENENAQNSENLQDDLQDNEKNETNELQ). The span at 25-35 (DNEKNETNELQ) shows a compositional bias: basic and acidic residues.

The protein belongs to the GrpE family. In terms of assembly, homodimer.

It is found in the cytoplasm. In terms of biological role, participates actively in the response to hyperosmotic and heat shock by preventing the aggregation of stress-denatured proteins, in association with DnaK and GrpE. It is the nucleotide exchange factor for DnaK and may function as a thermosensor. Unfolded proteins bind initially to DnaJ; upon interaction with the DnaJ-bound protein, DnaK hydrolyzes its bound ATP, resulting in the formation of a stable complex. GrpE releases ADP from DnaK; ATP binding to DnaK triggers the release of the substrate protein, thus completing the reaction cycle. Several rounds of ATP-dependent interactions between DnaJ, DnaK and GrpE are required for fully efficient folding. This is Protein GrpE from Campylobacter jejuni (strain RM1221).